The sequence spans 361 residues: Arginine N(omega)-methyltransferase (361 aa).

Positions 1 to 17 (MRHVQEARAVPAEHEAR) are enriched in basic and acidic residues. The disordered stretch occupies residues 1–24 (MRHVQEARAVPAEHEARPAPVTMP). An SAM-dependent MTase PRMT-type domain is found at 65-361 (DADAFAQIAR…WSDFTLRVSI (297 aa)).

Belongs to the class I-like SAM-binding methyltransferase superfamily. Protein arginine N-methyltransferase family.

It catalyses the reaction L-arginine + S-adenosyl-L-methionine = N(omega)-methyl-L-arginine + S-adenosyl-L-homocysteine + H(+). It participates in antibiotic biosynthesis. In terms of biological role, involved in the biosynthesis of the glucosamine-nitrosourea antibiotic streptozotocin (SZN). Catalyzes the conversion of L-arginine to N(omega)-methyl-L-arginine (L-NMA), using S-adenosyl-L-methionine (SAM) as a methyl donor. This Streptomyces achromogenes subsp. streptozoticus protein is Arginine N(omega)-methyltransferase.